Consider the following 271-residue polypeptide: 3-methyl-2-oxobutanoate hydroxymethyltransferase 1 (271 aa).

Mg(2+) contacts are provided by aspartate 53 and aspartate 92. Residues 53-54, aspartate 92, and lysine 120 each bind 3-methyl-2-oxobutanoate; that span reads DS. Glutamate 122 provides a ligand contact to Mg(2+). Residue glutamate 189 is the Proton acceptor of the active site.

This sequence belongs to the PanB family. Homodecamer; pentamer of dimers. Mg(2+) is required as a cofactor.

It is found in the cytoplasm. It catalyses the reaction 3-methyl-2-oxobutanoate + (6R)-5,10-methylene-5,6,7,8-tetrahydrofolate + H2O = 2-dehydropantoate + (6S)-5,6,7,8-tetrahydrofolate. It participates in cofactor biosynthesis; (R)-pantothenate biosynthesis; (R)-pantoate from 3-methyl-2-oxobutanoate: step 1/2. Functionally, catalyzes the reversible reaction in which hydroxymethyl group from 5,10-methylenetetrahydrofolate is transferred onto alpha-ketoisovalerate to form ketopantoate. In Burkholderia ambifaria (strain ATCC BAA-244 / DSM 16087 / CCUG 44356 / LMG 19182 / AMMD) (Burkholderia cepacia (strain AMMD)), this protein is 3-methyl-2-oxobutanoate hydroxymethyltransferase 1.